The chain runs to 427 residues: NAD kinase 2, mitochondrial (427 aa).

The transit peptide at Met1 to Ala33 directs the protein to the mitochondrion.

The protein belongs to the NAD kinase family. Homodimer.

It is found in the mitochondrion. The enzyme catalyses NAD(+) + ATP = ADP + NADP(+) + H(+). Its function is as follows. Mitochondrial NAD(+) kinase that phosphorylates NAD(+) to yield NADP(+). Can use both ATP or inorganic polyphosphate as the phosphoryl donor. The chain is NAD kinase 2, mitochondrial (nadk2) from Xenopus tropicalis (Western clawed frog).